We begin with the raw amino-acid sequence, 188 residues long: Acireductone dioxygenase (188 aa).

Fe(2+)-binding residues include His-97, His-99, Glu-103, and His-141. 4 residues coordinate Ni(2+): His-97, His-99, Glu-103, and His-141.

It belongs to the acireductone dioxygenase (ARD) family. Monomer. Fe(2+) serves as cofactor. Ni(2+) is required as a cofactor.

The catalysed reaction is 1,2-dihydroxy-5-(methylsulfanyl)pent-1-en-3-one + O2 = 3-(methylsulfanyl)propanoate + CO + formate + 2 H(+). It carries out the reaction 1,2-dihydroxy-5-(methylsulfanyl)pent-1-en-3-one + O2 = 4-methylsulfanyl-2-oxobutanoate + formate + 2 H(+). It participates in amino-acid biosynthesis; L-methionine biosynthesis via salvage pathway; L-methionine from S-methyl-5-thio-alpha-D-ribose 1-phosphate: step 5/6. Its function is as follows. Catalyzes 2 different reactions between oxygen and the acireductone 1,2-dihydroxy-3-keto-5-methylthiopentene (DHK-MTPene) depending upon the metal bound in the active site. Fe-containing acireductone dioxygenase (Fe-ARD) produces formate and 2-keto-4-methylthiobutyrate (KMTB), the alpha-ketoacid precursor of methionine in the methionine recycle pathway. Ni-containing acireductone dioxygenase (Ni-ARD) produces methylthiopropionate, carbon monoxide and formate, and does not lie on the methionine recycle pathway. This chain is Acireductone dioxygenase, found in Xanthomonas axonopodis pv. citri (strain 306).